We begin with the raw amino-acid sequence, 406 residues long: 2,3-bisphosphoglycerate-independent phosphoglycerate mutase (406 aa).

The protein belongs to the BPG-independent phosphoglycerate mutase family. A-PGAM subfamily.

It catalyses the reaction (2R)-2-phosphoglycerate = (2R)-3-phosphoglycerate. It participates in carbohydrate degradation; glycolysis; pyruvate from D-glyceraldehyde 3-phosphate: step 3/5. Catalyzes the interconversion of 2-phosphoglycerate and 3-phosphoglycerate. The sequence is that of 2,3-bisphosphoglycerate-independent phosphoglycerate mutase from Methanococcus vannielii (strain ATCC 35089 / DSM 1224 / JCM 13029 / OCM 148 / SB).